The primary structure comprises 144 residues: Large ribosomal subunit protein uL11 (144 aa).

This sequence belongs to the universal ribosomal protein uL11 family. As to quaternary structure, part of the ribosomal stalk of the 50S ribosomal subunit. Interacts with L10 and the large rRNA to form the base of the stalk. L10 forms an elongated spine to which L12 dimers bind in a sequential fashion forming a multimeric L10(L12)X complex. One or more lysine residues are methylated.

In terms of biological role, forms part of the ribosomal stalk which helps the ribosome interact with GTP-bound translation factors. This Marinomonas sp. (strain MWYL1) protein is Large ribosomal subunit protein uL11.